The chain runs to 128 residues: Putative histidinol dehydrogenase (128 aa).

Residues 21–84 are disordered; it reads QRPDIAPRHH…EGQEKASGRR (64 aa). Basic and acidic residues-rich tracts occupy residues 34 to 50 and 72 to 81; these read HRAE…RRTA and QGREGQEKAS.

The protein belongs to the histidinol dehydrogenase family.

The catalysed reaction is L-histidinol + 2 NAD(+) + H2O = L-histidine + 2 NADH + 3 H(+). It functions in the pathway amino-acid biosynthesis; L-histidine biosynthesis; L-histidine from 5-phospho-alpha-D-ribose 1-diphosphate: step 9/9. Functionally, catalyzes the sequential NAD-dependent oxidations of L-histidinol to L-histidinaldehyde and then to L-histidine. The chain is Putative histidinol dehydrogenase (hisD) from Azospirillum brasilense.